The following is a 203-amino-acid chain: Endo-type membrane-bound lytic murein transglycosylase A (203 aa).

The first 15 residues, 1–15, serve as a signal peptide directing secretion; the sequence is MKLRWLLILVVFLAG. The N-palmitoyl cysteine moiety is linked to residue cysteine 16. The S-diacylglycerol cysteine moiety is linked to residue cysteine 16.

It belongs to the transglycosylase Slt family.

It is found in the cell outer membrane. It carries out the reaction Endolytic cleavage of the (1-&gt;4)-beta-glycosidic linkage between N-acetylmuramic acid (MurNAc) and N-acetylglucosamine (GlcNAc) residues in peptidoglycan with concomitant formation of a 1,6-anhydrobond in the MurNAc residue.. Its function is as follows. Murein-degrading enzyme. May play a role in recycling of muropeptides during cell elongation and/or cell division. Preferentially cleaves at a distance of more than two disaccharide units from the ends of the glycan chain. The chain is Endo-type membrane-bound lytic murein transglycosylase A from Klebsiella pneumoniae subsp. pneumoniae (strain ATCC 700721 / MGH 78578).